Consider the following 371-residue polypeptide: 3-methyl-D-ornithine--L-lysine ligase (371 aa).

Lys-18 contributes to the ATP binding site. 19-20 (LQ) lines the L-lysine pocket. ATP contacts are provided by residues Asp-39, 57 to 58 (NI), and 80 to 81 (EN). Glu-80 is a binding site for L-lysine. Residues 93–277 (EKFSCPVLFD…LIELLFRAFN (185 aa)) form the ATP-grasp domain. Residues Lys-112, Lys-139, Ser-146, and 168–171 (EEYV) contribute to the ADP site. Residues 177 to 179 (SLE) and Asp-233 contribute to the D-ornithine site. Mg(2+) is bound by residues Glu-235, Glu-247, and Asp-249. Residue Glu-247 participates in ADP binding. D-ornithine-binding positions include 251–256 (RFPSQT) and Glu-310. 2 residues coordinate L-lysine: Ser-254 and Glu-310.

The protein belongs to the PylC family. The cofactor is Mg(2+).

The enzyme catalyses (3R)-3-methyl-D-ornithine + L-lysine + ATP = (3R)-3-methyl-D-ornithyl-N(6)-L-lysine + ADP + phosphate + H(+). It functions in the pathway amino-acid biosynthesis; L-pyrrolysine biosynthesis. Is required for the biosynthesis of pyrrolysine. Catalyzes the ATP-dependent ligation between (3R)-3-methyl-D-ornithine and L-lysine, leading to (3R)-3-methyl-D-ornithyl-N6-L-lysine. Is also involved in the synthesis of pyrroline-carboxy-lysine (Pcl), a demethylated form of pyrrolysine that is generated by the pyrrolysine biosynthetic enzymes when the growth media is supplemented with D-ornithine. The chain is 3-methyl-D-ornithine--L-lysine ligase from Methanosarcina mazei (strain ATCC BAA-159 / DSM 3647 / Goe1 / Go1 / JCM 11833 / OCM 88) (Methanosarcina frisia).